The primary structure comprises 198 residues: Transmembrane protein 17 (198 aa).

Asn-13 and Asn-23 each carry an N-linked (GlcNAc...) asparagine glycan. 4 helical membrane passes run 45–65, 78–98, 110–130, and 142–162; these read MSLYFNTYYFPLWWVSSIMML, FIVITVIILITLIEAIRLYLG, LAGFWLLSLLLQLPLILFLLF, and AIHIIFTLFLAFQVVAAFLTL.

The protein belongs to the TMEM17 family. As to quaternary structure, part of the tectonic-like complex (also named B9 complex).

It is found in the cell projection. The protein resides in the cilium membrane. Functionally, transmembrane component of the tectonic-like complex, a complex localized at the transition zone of primary cilia and acting as a barrier that prevents diffusion of transmembrane proteins between the cilia and plasma membranes. Required for ciliogenesis and sonic hedgehog/SHH signaling. The protein is Transmembrane protein 17 (TMEM17) of Homo sapiens (Human).